We begin with the raw amino-acid sequence, 492 residues long: MANYFNTLNLRQQLAQLGKCRFMAREEFVDETGYLKGKKVVIVGCGAQGLNQGLNMRDSGLDIAYALRKEAIEEKRASWRKATENGFQVGTYEELIPQADLVINLTPDKQHSSVVSAVQPLMKEGAALGYSHGLNIVEVGEQIRKDITVVMVAPKCPGTEVREEYKRGFGVPTLIAVHPENDPKGEGMAIAKAWAAATGAHRAGVLESSFVAEVKSDLMGEQTILCGMLQAGSLLCYDKLVADGAEPGYAGKLIQFGWETITEALKQGGITLMMDRLSNPAKLRAYALSEQLKEMMTPLFQKHMDDIISGEFSSGMMADWANDDKKLLGWREETGNTSFENSPEYDGKISEQEYFDHGVLMVAMVKAGVELAFEIMVDTGIIAESAYYESLHELPLIANTISRKRLYEMNVVISDTAEYGNYLFSHVAVPLLKEKFMGSLQAGDLGKPVVDNGIDNAQLRDVNEAIRHHPIEVVGRVLRGYMTDMKRIAVGG.

Residues 15-208 (AQLGKCRFMA…GAHRAGVLES (194 aa)) form the KARI N-terminal Rossmann domain. Residues 45–48 (CGAQ), Arg68, Arg76, Ser78, and 108–110 (DKQ) contribute to the NADP(+) site. Residue His132 is part of the active site. NADP(+) is bound at residue Gly158. KARI C-terminal knotted domains follow at residues 209–344 (SFVA…NSPE) and 345–485 (YDGK…MTDM). Residues Asp217, Glu221, Glu389, and Glu393 each coordinate Mg(2+). Ser414 is a binding site for substrate.

It belongs to the ketol-acid reductoisomerase family. It depends on Mg(2+) as a cofactor.

The catalysed reaction is (2R)-2,3-dihydroxy-3-methylbutanoate + NADP(+) = (2S)-2-acetolactate + NADPH + H(+). It catalyses the reaction (2R,3R)-2,3-dihydroxy-3-methylpentanoate + NADP(+) = (S)-2-ethyl-2-hydroxy-3-oxobutanoate + NADPH + H(+). Its pathway is amino-acid biosynthesis; L-isoleucine biosynthesis; L-isoleucine from 2-oxobutanoate: step 2/4. It functions in the pathway amino-acid biosynthesis; L-valine biosynthesis; L-valine from pyruvate: step 2/4. Involved in the biosynthesis of branched-chain amino acids (BCAA). Catalyzes an alkyl-migration followed by a ketol-acid reduction of (S)-2-acetolactate (S2AL) to yield (R)-2,3-dihydroxy-isovalerate. In the isomerase reaction, S2AL is rearranged via a Mg-dependent methyl migration to produce 3-hydroxy-3-methyl-2-ketobutyrate (HMKB). In the reductase reaction, this 2-ketoacid undergoes a metal-dependent reduction by NADPH to yield (R)-2,3-dihydroxy-isovalerate. The sequence is that of Ketol-acid reductoisomerase (NADP(+)) from Photorhabdus laumondii subsp. laumondii (strain DSM 15139 / CIP 105565 / TT01) (Photorhabdus luminescens subsp. laumondii).